The primary structure comprises 236 residues: Probable ascorbate-specific transmembrane electron transporter 2 (236 aa).

Topologically, residues 1-11 are cytoplasmic; that stretch reads MAAGLGVKAAP. The helical transmembrane segment at 12 to 32 threads the bilayer; it reads FTYVAHALAVAAAVMVLVWCI. One can recognise a Cytochrome b561 domain in the interval 15–219; the sequence is VAHALAVAAA…FGAAVVVAAV (205 aa). Residues 33–53 are Extracellular-facing; it reads SFRGGLAFEADNKNLIFNVHP. H52 provides a ligand contact to heme b. A helical membrane pass occupies residues 54 to 74; it reads VLMLIGYIILGSEAIMIYKIF. Residue 67–75 coordinates L-ascorbate; sequence AIMIYKIFP. Over 75–84 the chain is Cytoplasmic; the sequence is PKLNHDTTKL. The chain crosses the membrane as a helical span at residues 85-105; that stretch reads IHLILHAIAIVLGAVGIYCAF. Heme b is bound by residues H86 and H120. The Extracellular portion of the chain corresponds to 106–122; sequence KFHNESGIANLYSLHSW. A monodehydro-L-ascorbate radical-binding site is contributed by 116 to 125; it reads LYSLHSWLGI. Residues 123–143 traverse the membrane as a helical segment; it reads LGIGTISLYGIQWIFGFVAFF. The Cytoplasmic segment spans residues 144–153; the sequence is YPGAAPHVRR. A helical membrane pass occupies residues 154-174; it reads GALPWHVLFGLFVYVLTLATA. H159 contributes to the heme b binding site. Residues 175–196 lie on the Extracellular side of the membrane; that stretch reads ELGLLEKLTFLQSSGLDKYGAE. Residues 197–217 traverse the membrane as a helical segment; it reads AFLVNFTGLVVALFGAAVVVA. At 218–236 the chain is on the cytoplasmic side; sequence AVAPAHVEEPEGYAPIPVN.

Requires heme b as cofactor.

Its subcellular location is the membrane. Functionally, two-heme-containing cytochrome. Catalyzes ascorbate-dependent trans-membrane electron transfer by utilizing a concerted H(+)/e(-) transfer mechanism. The chain is Probable ascorbate-specific transmembrane electron transporter 2 from Oryza sativa subsp. japonica (Rice).